Reading from the N-terminus, the 425-residue chain is Histone-binding protein RBBP7 (425 aa).

WD repeat units lie at residues Q47–H122, R128–R173, G181–D217, V228–D269, V275–F312, E318–H369, and I376–M403.

This sequence belongs to the WD repeat RBAP46/RBAP48/MSI1 family. Binds directly to helix 1 of the histone fold of histone H4, a region that is not accessible when H4 is in chromatin.

The protein resides in the nucleus. In terms of biological role, core histone-binding subunit that may target chromatin remodeling factors, histone acetyltransferases and histone deacetylases to their histone substrates in a manner that is regulated by nucleosomal DNA. Component of several complexes which regulate chromatin metabolism. The sequence is that of Histone-binding protein RBBP7 (rbbp7) from Xenopus laevis (African clawed frog).